Here is a 410-residue protein sequence, read N- to C-terminus: Aspartate aminotransferase (410 aa).

Positions 47, 135, and 185 each coordinate L-aspartate. Lys-249 is modified (N6-(pyridoxal phosphate)lysine). Position 385 (Arg-385) interacts with L-aspartate.

It belongs to the class-I pyridoxal-phosphate-dependent aminotransferase family. In terms of assembly, homodimer. Requires pyridoxal 5'-phosphate as cofactor.

The protein localises to the cytoplasm. It catalyses the reaction L-aspartate + 2-oxoglutarate = oxaloacetate + L-glutamate. Its function is as follows. Catalyzes the reversible conversion of aspartate and 2-oxoglutarate to glutamate and oxaloacetate. This Rhizobium meliloti (Ensifer meliloti) protein is Aspartate aminotransferase.